We begin with the raw amino-acid sequence, 99 residues long: MAVNPLDFLKNMSNFKDNIDNIKKEISQIVVCGRAGSDVVVVEMNGEFVVKKILIKEDFFNDLDNEALEHMIKSAFNDAVFKVKEEIKSKTMGSIPFGI.

Belongs to the YbaB/EbfC family. Homodimer.

The protein resides in the cytoplasm. It localises to the nucleoid. In terms of biological role, binds to DNA and alters its conformation. May be involved in regulation of gene expression, nucleoid organization and DNA protection. The chain is Nucleoid-associated protein EbfC from Borrelia duttonii (strain Ly).